The following is a 615-amino-acid chain: ATP-dependent zinc metalloprotease FtsH (615 aa).

The Cytoplasmic segment spans residues 1 to 8; sequence MAMNKDKP. A helical membrane pass occupies residues 9–29; the sequence is WTLYLLAVGLAVLAAVQFGLF. Topologically, residues 30–104 are periplasmic; that stretch reads SQPAVQAIPY…FSGVVEDNTV (75 aa). The helical transmembrane segment at 105–125 threads the bilayer; sequence ATVMGALMPLLMLLALWYFLF. The Cytoplasmic segment spans residues 126-615; sequence HGLGQKQGLG…ATYVLVDATK (490 aa). Position 198 to 205 (198 to 205) interacts with ATP; it reads GPPGTGKT. Histidine 420 serves as a coordination point for Zn(2+). The active site involves glutamate 421. Residues histidine 424 and aspartate 497 each coordinate Zn(2+).

This sequence in the central section; belongs to the AAA ATPase family. It in the C-terminal section; belongs to the peptidase M41 family. As to quaternary structure, homohexamer. It depends on Zn(2+) as a cofactor.

It localises to the cell inner membrane. In terms of biological role, acts as a processive, ATP-dependent zinc metallopeptidase for both cytoplasmic and membrane proteins. Plays a role in the quality control of integral membrane proteins. This is ATP-dependent zinc metalloprotease FtsH from Pseudomonas putida (strain ATCC 700007 / DSM 6899 / JCM 31910 / BCRC 17059 / LMG 24140 / F1).